The primary structure comprises 605 residues: Elongation factor 4 (605 aa).

Residues Lys-11 to Thr-193 form the tr-type G domain. GTP-binding positions include Asp-23–Thr-28 and Asn-140–Asp-143.

It belongs to the TRAFAC class translation factor GTPase superfamily. Classic translation factor GTPase family. LepA subfamily.

Its subcellular location is the cell inner membrane. It carries out the reaction GTP + H2O = GDP + phosphate + H(+). In terms of biological role, required for accurate and efficient protein synthesis under certain stress conditions. May act as a fidelity factor of the translation reaction, by catalyzing a one-codon backward translocation of tRNAs on improperly translocated ribosomes. Back-translocation proceeds from a post-translocation (POST) complex to a pre-translocation (PRE) complex, thus giving elongation factor G a second chance to translocate the tRNAs correctly. Binds to ribosomes in a GTP-dependent manner. This chain is Elongation factor 4, found in Acinetobacter baumannii (strain AB307-0294).